The sequence spans 319 residues: Olfactory receptor 13F1 (319 aa).

Over 1 to 25 (MFPANWTSVKVFFFLGFFHYPKVQV) the chain is Extracellular. N-linked (GlcNAc...) asparagine glycosylation occurs at N5. The chain crosses the membrane as a helical span at residues 26-46 (IIFAVCLLMYLITLLGNIFLI). Topologically, residues 47 to 54 (SITILDSH) are cytoplasmic. Residues 55-75 (LHTPMYLFLSNLSFLDIWYSS) form a helical membrane-spanning segment. Topologically, residues 76–99 (SALSPMLANFVSGRNTISFSGCAT) are extracellular. C97 and C189 are joined by a disulfide. A helical membrane pass occupies residues 100–120 (QMYLSLAMGSTECVLLPMMAY). Over 121-139 (DRYVAICNPLRYPVIMNRR) the chain is Cytoplasmic. A helical membrane pass occupies residues 140–160 (TCVQIAAGSWMTGCLTAMVEM). Residues 161 to 197 (MSVLPLSLCGNSIINHFTCEILAILKLVCVDTSLVQL) are Extracellular-facing. The helical transmembrane segment at 198–217 (IMLVISVLLLPMPMLLICIS) threads the bilayer. At 218–237 (YAFILASILRISSVEGRSKA) the chain is on the cytoplasmic side. Residues 238–258 (FSTCTAHLMVVVLFYGTALSM) form a helical membrane-spanning segment. At 259–271 (HLKPSAVDSQEID) the chain is on the extracellular side. The helical transmembrane segment at 272-292 (KFMALVYAGQTPMLNPIIYSL) threads the bilayer. Topologically, residues 293–319 (RNKEVKVALKKLLIRNHFNTAFISILK) are cytoplasmic.

Belongs to the G-protein coupled receptor 1 family.

The protein resides in the cell membrane. Functionally, odorant receptor. The sequence is that of Olfactory receptor 13F1 (OR13F1) from Homo sapiens (Human).